The sequence spans 599 residues: Elongation factor 4 (599 aa).

One can recognise a tr-type G domain in the interval 2–184 (KNIRNFSIIA…RLVRDIPPPE (183 aa)). Residues 14–19 (DHGKST) and 131–134 (NKID) contribute to the GTP site.

The protein belongs to the TRAFAC class translation factor GTPase superfamily. Classic translation factor GTPase family. LepA subfamily.

The protein localises to the cell inner membrane. It catalyses the reaction GTP + H2O = GDP + phosphate + H(+). Its function is as follows. Required for accurate and efficient protein synthesis under certain stress conditions. May act as a fidelity factor of the translation reaction, by catalyzing a one-codon backward translocation of tRNAs on improperly translocated ribosomes. Back-translocation proceeds from a post-translocation (POST) complex to a pre-translocation (PRE) complex, thus giving elongation factor G a second chance to translocate the tRNAs correctly. Binds to ribosomes in a GTP-dependent manner. In Shigella sonnei (strain Ss046), this protein is Elongation factor 4.